Consider the following 1035-residue polypeptide: NACHT, LRR and PYD domains-containing protein 3 (1035 aa).

In terms of domain architecture, Pyrin spans 1-93 (MKMMSVRCKL…WEKAKKDQPE (93 aa)). Residue S5 is modified to Phosphoserine. Residues C8 and C106 are joined by a disulfide bond. At Y13 the chain carries Phosphotyrosine. C128 carries the S-palmitoyl cysteine lipid modification. The interval 129 to 132 (KKKK) is required for binding to phosphatidylinositol 4-phosphate (PtdIns4P). 2 positions are modified to phosphotyrosine: Y134 and Y138. Positions 138 to 208 (YRRHVRSRFY…SSLKLELLFE (71 aa)) constitute an FISNA domain. Phosphoserine is present on S159. Y166 bears the Phosphotyrosine mark. T167 is a binding site for ATP. Phosphoserine is present on S199. The 317-residue stretch at 218 to 534 (HTVVFQGAAG…EFFAAMYYLL (317 aa)) folds into the NACHT domain. Residue 224–231 (GAAGIGKT) participates in ATP binding. 2 positions are modified to phosphoserine: S263 and S293. A Glycyl lysine isopeptide (Lys-Gly) (interchain with G-Cter in ubiquitin) cross-link involves residue K322. S332 is subject to Phosphoserine. The KFERQ-like motif 1 signature appears at 353-357 (LEKLQ). Residue K428 forms a Glycyl lysine isopeptide (Lys-Gly) (interchain with G-Cter in ubiquitin) linkage. H520 lines the ATP pocket. The KFERQ-like motif 2 signature appears at 603–607 (QVRLE). K689 participates in a covalent cross-link: Glycyl lysine isopeptide (Lys-Gly) (interchain with G-Cter in ubiquitin). 2 positions are modified to phosphoserine: S727 and S734. LRR repeat units follow at residues 741-761 (SLTELDLSDNTLGDPGMRVLC), 770-791 (NIQRLWLGRCGLTHQCCFNISS), 798-818 (KLVELDLSDNALGDFGVRLLC), 827-848 (NLQKLWLVSCCLTSACCQDLAL), and 855-875 (SLTRLYIGENALGDSGVQVLC). The KFERQ-like motif 3 signature appears at 797 to 801 (QKLVE). S805 is modified (phosphoserine). Residues C836, C837, and C843 are each lipidated (S-palmitoyl cysteine). Position 860 is a phosphotyrosine (Y860). Residue K877 forms a Glycyl lysine isopeptide (Lys-Gly) (interchain with G-Cter in ubiquitin) linkage. LRR repeat units lie at residues 884–905 (NLQKLGLVNSGLTSLCCSALTS), 912–932 (NLTHLYLRSNALGDMGLKLLC), 941–962 (KLQMLELDNCSLTSHSCWDLST), and 969–990 (SLRKLNLSNNDLGDLCVVTLCE). The S-palmitoyl cysteine moiety is linked to residue C957. Residue K972 forms a Glycyl lysine isopeptide (Lys-Gly) (interchain with G-Cter in ubiquitin) linkage. The KFERQ-like motif 4 motif lies at 990–994 (EVLKQ). Position 1034 is a phosphoserine (S1034).

Belongs to the NLRP family. Sensor component of NLRP3 inflammasomes; inflammasomes are supramolecular complexes that assemble in the cytosol in response to pathogens and other damage-associated signals and play critical roles in innate immunity and inflammation. The core of NLRP3 inflammasomes consists of a signal sensor component (NLRP3), an adapter (PYCARD/ASC), which recruits an effector pro-inflammatory caspase (CASP1 and, possibly, CASP4 and CASP5). Homodecamer; inactive NLRP3 forms homodecameric double-ring cages that hide pyrin domains within NACHT-LRR rings to avoid premature activation. Interacts (via pyrin domain) with PYCARD/ASC (via pyrin domain); interaction is direct. Interacts (via LRR repeat domain) with NEK7 (via N-terminus); the interaction is required for the formation of the complex NLRP3:PYCARD, oligomerization of PYCARD/ASC and activation of CASP1. Interacts (via LRR repeat domain) with NR4A1/Nur77 (via N-terminus); the interaction is direct, requires activation of NR4A1 by its ligands NBRE-containing dsDNA and lipopolysaccharide, and stimulates the association of NLRP3 with NEK7 for non-canonical NLRP3 inflammasome activation. Interacts with CARD8; leading to inhibit formation of the NLRP3 inflammasome. Interacts with MEFV; this interaction targets NLRP3 to degradation by autophagy, hence preventing excessive IL1B- and IL18-mediated inflammation. Interacts with EIF2AK2/PKR; this interaction requires EIF2AK2 activity, is accompanied by EIF2AK2 autophosphorylation and promotes inflammasome assembly in response to specific stimuli. Interacts with GBP5 (via DAPIN domain); this interaction promotes inflammasome assembly in response to microbial and soluble, but not crystalline, agents. Interacts with PML (isoform PML-1) (via the leucine-rich repeat (LRR) domain); PML-mediated increase in NLRP3 inflammasome activation does not depend upon this interaction. Interacts (via NACHT domain) with DHX33 (via DEAH box); NLRP3 activation in presence of cytosolic dsRNA is mediated by DHX33. Interacts (via NACHT and LRR domains) with ARRB2; this interaction is direct and inducible by polyunsaturated fatty acids (PUFAs). Interacts (via NACHT domain) with DDX3X under both LPS-primed and inflammasome-activating conditions. Interacts with IRF4 (via the LRR domain); this interaction is direct and is required for optimal IRF4 binding to IL4 promoter and efficient IL4 transactivation during differentiation of Th2 helper T-cells. Interacts with MAVS; promoting localization to mitochondria and activation of the NLRP3 inflammasome. Interacts with MARK4; promoting localization of NLRP3 to the microtubule organizing center (MTOC). Interacts with TRIM50; this interaction also promotes NLRP3 oligomerization and subsequent inflammasome activation. Interacts with IRGM; preventing NLRP3 inflammasome assembly and promoting NLRP3 degradation. Interacts (via NACHT and LLR domains) with ABHD8; this interaction is enhanced in the presence of NLRP3 inflammasome inducers, such as ATP, nigericin, silica, or alum. Interaction with ABHD8 leads the recruitment of ZDHHC12, hence facilitating NLRP3 palmitoylation and degradation by the chaperone-mediated autophagy pathway (CMA), therefore attenuating NLRP3 inflammasome activation. In terms of processing, phosphorylation by MAPK8/JNK1 increases inflammasome activation by promoting deubiquitination by BRCC3 and NLRP3 homooligomerization. Phosphorylation at Ser-805 by CSNK1A1 prevents inflammasome activation by preventing NEK7 recruitment. Phosphorylation at Ser-5 in the pyrin domain inhibits homomultimerization of NLRP3 and activation of the NLRP3 inflammasome: dephosphorylation by protein phosphatase 2A (PP2A) promotes assembly of the NLRP3 inflammasome. Phosphorylation at Ser-293 by PKD/PRKD1 promotes NLRP3 inflammasome assembly. Phosphorylation by ERK1/MAPK3 promotes NLRP3 inflammasome assembly. Phosphorylation by BTK (at Tyr-134, Tyr-138 and Tyr-166) in the region that mediates binding to phosphatidylinositol phosphate, promotes relocalization of NLRP3 and assembly of the NLRP3 inflammasome. Phosphorylation at Tyr-860 inhibits NLRP3 inflammasome assembly: dephosphorylation by PTPN22 promotes inflammasome activation. Phosphorylated by LATS1 and LATS2 at Ser-263 following palmitoylation by ZDHHC1, promoting its relocalization to the microtubule organizing center (MTOC), where NLRP3 is activated by NEK7, leading to inflammasome assembly and activation. Post-translationally, ubiquitinated; undergoes both 'Lys-48'- and 'Lys-63'-linked polyubiquitination. Ubiquitination does not lead to degradation, but inhibits inflammasome activation. Deubiquitination is catalyzed by BRCC3 and associated with NLRP3 activation and inflammasome assembly. This process can be induced by the activation of Toll-like receptors (by LPS), through a non-transcriptional pathway dependent on the mitochondrial production of reactive oxygen species, and by ATP. Ubiquitinated by TRIM31 via 'Lys-48'-linked ubiquitination, leading to its degradation by the proteasome. Ubiquitinated at Lys-689 by the SCF(FBXL2) complex, leading to its degradation by the proteasome. Ubiquitinated by TRIM35 via 'lys-48' and 'Lys-63'-linked ubiquitination leading to inhibition of NLRP3 inflammasome activation. Undergoes 'Lys-27'-linked polyubiquitination by MARCHF5, leading to NLRP3-NEK7 complex formation and NLRP3 oligomerization. The disulfide bond in the pyrin domain might play a role in reactive oxygen species-mediated activation. In terms of processing, palmitoylation by ZDHHC12 promotes NLRP3 degradation by the chaperone-mediated autophagy pathway (CMA) and therefore limits NLRP3 inflammasome activation. Interaction with ZDHHC12, and hence NLRP3 palmitoylation, is greatly enhanced by ABHD8. Following palmitoylation, HSPA8/HSC70 recognizes and binds the KFERQ-like motifs on NLRP3 and promotes NLRP3 recruitment to lysosomes, where it is degraded via the chaperone-mediated autophagy pathway in a LAMP2-dependent process. Palmitoylation at Cys-836 and Cys-837 by ZDHHC5 enhances its binding to NEK7 leading to inflammasome assembly and activation. Palmitoylation at Cys-128 and Cys-957 by ZDHHC1 facilitates phosphorylation at Ser-263 by LATS1 and LATS2, promoting its relocalization to the microtubule organizing center (MTOC), where NLRP3 is activated by NEK7, leading to inflammasome assembly and activation. Depalmitoylated by ABHD17A. Post-translationally, degraded via selective autophagy following interaction with IRGM. IRGM promotes NLRP3 recruitment to autophagosome membranes, promoting its SQSTM1/p62-dependent autophagy-dependent degradation.

The protein localises to the cytoplasm. It localises to the cytosol. Its subcellular location is the inflammasome. It is found in the cytoskeleton. The protein resides in the microtubule organizing center. The protein localises to the golgi apparatus membrane. It localises to the endoplasmic reticulum. Its subcellular location is the mitochondrion. It is found in the secreted. The protein resides in the nucleus. The catalysed reaction is ATP + H2O = ADP + phosphate + H(+). With respect to regulation, under resting conditions, NLRP3 binds ADP and is autoinhibited. Inactive NLRP3 forms homodecameric double-ring cages that hide pyrin domains within NACHT-LRR rings to avoid premature activation. NLRP3 activation stimuli include extracellular ATP, nigericin, reactive oxygen species, crystals of monosodium urate or cholesterol, amyloid-beta fibers, environmental or industrial particles and nanoparticles, such as asbestos, silica, aluminum salts, cytosolic dsRNA, etc. Almost all stimuli trigger intracellular K(+) efflux. These stimuli lead to membrane perturbations that induce activation of NLRP3. Upon activation, NLRP3 is transported to microtubule organizing center (MTOC), where it is unlocked by NEK7, leading to its relocalization to dispersed trans-Golgi network (dTGN) vesicle membranes and recruitment of PYCARD/ASC for the formation of an active inflammasome complex. NEK7-activated NLRP3 forms a disk-shaped inflammasome. NLRP3 and PYCARD/ASC interact via their respective pyrin domains; interaction initiates speck formation (nucleation) which greatly enhances further addition of soluble PYCARD/ASC molecules to the speck in a prion-like polymerization process. Clustered PYCARD/ASC nucleates the formation of CASP1 filaments through the interaction of their respective CARD domains, acting as a platform for CASP1 polymerization and activation. Active CASP1 then processes IL1B and IL18 precursors, leading to the release of mature cytokines in the extracellular milieu and inflammatory response. NLRP3 inflammasome assembly is inhibited by IRGM, which impedes NLRP3 oligomerization. NLRP3 inflammasome is inhibited by cyclic AMP (cAMP), which directly binds NLRP3; inhibition is relieved by calcium-sensing receptor CASR, which inhibits production of cAMP. Specifically inhibited by sulfonylurea MCC950 (also named CP-456,773, CRID3), a potent and specific small-molecule inhibitor of the NLRP3 inflammasome that acts by preventing ATP hydrolysis. Its function is as follows. Sensor component of the NLRP3 inflammasome, which mediates inflammasome activation in response to defects in membrane integrity, leading to secretion of inflammatory cytokines IL1B and IL18 and pyroptosis. In response to pathogens and other damage-associated signals that affect the integrity of membranes, initiates the formation of the inflammasome polymeric complex composed of NLRP3, CASP1 and PYCARD/ASC. Recruitment of pro-caspase-1 (proCASP1) to the NLRP3 inflammasome promotes caspase-1 (CASP1) activation, which subsequently cleaves and activates inflammatory cytokines IL1B and IL18 and gasdermin-D (GSDMD), promoting cytokine secretion and pyroptosis. Activation of NLRP3 inflammasome is also required for HMGB1 secretion; stimulating inflammatory responses. Under resting conditions, ADP-bound NLRP3 is autoinhibited. NLRP3 activation stimuli include extracellular ATP, nigericin, reactive oxygen species, crystals of monosodium urate or cholesterol, amyloid-beta fibers, environmental or industrial particles and nanoparticles, such as asbestos, silica, aluminum salts, cytosolic dsRNA, etc. Almost all stimuli trigger intracellular K(+) efflux. These stimuli lead to membrane perturbation and activation of NLRP3. Upon activation, NLRP3 is transported to microtubule organizing center (MTOC), where it is unlocked by NEK7, leading to its relocalization to dispersed trans-Golgi network (dTGN) vesicle membranes and formation of an active inflammasome complex. Associates with dTGN vesicle membranes by binding to phosphatidylinositol 4-phosphate (PtdIns4P). Shows ATPase activity. In terms of biological role, independently of inflammasome activation, regulates the differentiation of T helper 2 (Th2) cells and has a role in Th2 cell-dependent asthma and tumor growth. During Th2 differentiation, required for optimal IRF4 binding to IL4 promoter and for IRF4-dependent IL4 transcription. Binds to the consensus DNA sequence 5'-GRRGGNRGAG-3'. May also participate in the transcription of IL5, IL13, GATA3, CCR3, CCR4 and MAF. This chain is NACHT, LRR and PYD domains-containing protein 3, found in Rattus norvegicus (Rat).